We begin with the raw amino-acid sequence, 434 residues long: Trigger factor (434 aa).

A PPIase FKBP-type domain is found at 161 to 246; sequence EDRVTVDFSG…LKKVEERELP (86 aa).

This sequence belongs to the FKBP-type PPIase family. Tig subfamily.

The protein resides in the cytoplasm. It catalyses the reaction [protein]-peptidylproline (omega=180) = [protein]-peptidylproline (omega=0). Functionally, involved in protein export. Acts as a chaperone by maintaining the newly synthesized protein in an open conformation. Functions as a peptidyl-prolyl cis-trans isomerase. The polypeptide is Trigger factor (Serratia proteamaculans (strain 568)).